The following is a 656-amino-acid chain: Methylenetetrahydrofolate reductase (NADPH) (656 aa).

Positions 1–46 (MVNEARGNDSLNPCLEGSASSSSESSKDSSRCSTPGLDPERHERLR) are disordered. Phosphoserine occurs at positions 10, 18, 20, 21, 23, 25, 26, 29, and 30. Thr34 carries the post-translational modification Phosphothreonine. The active-site Proton donor/acceptor is the Glu63. Residues 63 to 68 (EFFPPR) and 94 to 95 (TW) each bind NAD(+). Position 94 is a phosphothreonine (Thr94). Residue 94–95 (TW) coordinates FAD. Ser103 is modified (phosphoserine). Residues His127, 157–159 (RGD), 174–175 (YA), Tyr197, 201–204 (HPEA), Asp210, and Lys217 contribute to the FAD site. Asp159 is a substrate binding site. 3 residues coordinate substrate: Gln228, Tyr321, and Arg325. Ser394 is subject to Phosphoserine. At Thr451 the chain carries Phosphothreonine. S-adenosyl-L-methionine-binding positions include Asn456, 461–464 (AAET), 481–485 (TINSQ), Thr560, and Thr573.

It belongs to the methylenetetrahydrofolate reductase family. In terms of assembly, homodimer. The cofactor is FAD. In terms of processing, phosphorylation of an N-terminal serine-rich phosphorylation region increases sensitivity to S-adenosylmethionine and inhibition.

The enzyme catalyses (6S)-5-methyl-5,6,7,8-tetrahydrofolate + NADP(+) = (6R)-5,10-methylene-5,6,7,8-tetrahydrofolate + NADPH + H(+). It participates in one-carbon metabolism; tetrahydrofolate interconversion. Its activity is regulated as follows. Allosterically regulated by S-adenosylmethionine (SAM). Its function is as follows. Catalyzes the conversion of 5,10-methylenetetrahydrofolate to 5-methyltetrahydrofolate, a cosubstrate for homocysteine remethylation to methionine. Represents a key regulatory connection between the folate and methionine cycles. The polypeptide is Methylenetetrahydrofolate reductase (NADPH) (MTHFR) (Macaca fascicularis (Crab-eating macaque)).